Here is a 301-residue protein sequence, read N- to C-terminus: Lipoyl synthase (301 aa).

[4Fe-4S] cluster is bound by residues Cys-53, Cys-58, Cys-64, Cys-79, Cys-83, Cys-86, and Ser-290. Residues 65–279 enclose the Radical SAM core domain; the sequence is WSRKTATYML…RIYGKSIGFK (215 aa).

Belongs to the radical SAM superfamily. Lipoyl synthase family. [4Fe-4S] cluster is required as a cofactor.

The protein localises to the cytoplasm. It carries out the reaction [[Fe-S] cluster scaffold protein carrying a second [4Fe-4S](2+) cluster] + N(6)-octanoyl-L-lysyl-[protein] + 2 oxidized [2Fe-2S]-[ferredoxin] + 2 S-adenosyl-L-methionine + 4 H(+) = [[Fe-S] cluster scaffold protein] + N(6)-[(R)-dihydrolipoyl]-L-lysyl-[protein] + 4 Fe(3+) + 2 hydrogen sulfide + 2 5'-deoxyadenosine + 2 L-methionine + 2 reduced [2Fe-2S]-[ferredoxin]. It participates in protein modification; protein lipoylation via endogenous pathway; protein N(6)-(lipoyl)lysine from octanoyl-[acyl-carrier-protein]: step 2/2. Functionally, catalyzes the radical-mediated insertion of two sulfur atoms into the C-6 and C-8 positions of the octanoyl moiety bound to the lipoyl domains of lipoate-dependent enzymes, thereby converting the octanoylated domains into lipoylated derivatives. This is Lipoyl synthase from Leptospira interrogans serogroup Icterohaemorrhagiae serovar copenhageni (strain Fiocruz L1-130).